Here is a 228-residue protein sequence, read N- to C-terminus: MTFTLRLLVLCTVYSYVISQCDDNGVIYTNGDKWIRNNHFLVTCRDGNIQTLKCVTDSGHLLEVGSKSYVENGYEYMCAREVTDNLNTNTCPTFADFSDDIFKDRFAICCISRRFKGCVDANGDIVKSGFFVIGNKSLKYCRIQANQLQARIEPKGCFNGTEKDDVNDEELHIKKYAVWREGDIEYRCGDDGVHIQRCFPPELKKKAIWAGTAWIQEDGQVKTCGKIN.

Residues 1–19 (MTFTLRLLVLCTVYSYVIS) form the signal peptide. Asparagine 135 and asparagine 159 each carry an N-linked (GlcNAc...) asparagine glycan.

Expressed in body wall muscle.

Its subcellular location is the secreted. The protein resides in the extracellular space. It is found in the extracellular matrix. The protein localises to the basement membrane. Functionally, required for the directional control of distal tip cell migration during gonadogenesis, probably by recruiting fibulin fbl-1 to the gonad basement membrane. The protein is Abnormal cell migration protein 18 of Caenorhabditis elegans.